Consider the following 687-residue polypeptide: Mediator of RNA polymerase II transcription subunit 17 (687 aa).

A compositionally biased stretch (low complexity) spans 30-43 (LSSNPNSSLHSPTS). Disordered regions lie at residues 30–70 (LSSN…NKTK) and 130–189 (QLGS…ETDD). Composition is skewed to basic and acidic residues over residues 56–70 (TSIR…NKTK), 136–147 (SDGHNSEKKDTD), and 167–183 (KDNP…KTNE).

The protein belongs to the Mediator complex subunit 17 family. Component of the Mediator complex, which is composed of at least 21 subunits that form three structurally distinct submodules. The Mediator head module contains MED6, MED8, MED11, SRB4/MED17, SRB5/MED18, ROX3/MED19, SRB2/MED20 and SRB6/MED22, the middle module contains MED1, MED4, NUT1/MED5, MED7, CSE2/MED9, NUT2/MED10, SRB7/MED21 and SOH1/MED31, and the tail module contains MED2, PGD1/MED3, RGR1/MED14, GAL11/MED15 and SIN4/MED16. The head and the middle modules interact directly with RNA polymerase II, whereas the elongated tail module interacts with gene-specific regulatory proteins. The head module may also interact with the TFIIF complex. SRB4/MED17 interacts directly with MED6, MED11, ROX3/MED19, SRB2/MED20 and SRB6/MED22. Interacts directly with the activator GAL4.

The protein resides in the nucleus. Component of the Mediator complex, a coactivator involved in the regulated transcription of nearly all RNA polymerase II-dependent genes. Mediator functions as a bridge to convey information from gene-specific regulatory proteins to the basal RNA polymerase II transcription machinery. The Mediator complex, having a compact conformation in its free form, is recruited to promoters by direct interactions with regulatory proteins and serves for the assembly of a functional preinitiation complex with RNA polymerase II and the general transcription factors. The Mediator complex unfolds to an extended conformation and partially surrounds RNA polymerase II, specifically interacting with the unphosphorylated form of the C-terminal domain (CTD) of RNA polymerase II. The Mediator complex dissociates from the RNA polymerase II holoenzyme and stays at the promoter when transcriptional elongation begins. The sequence is that of Mediator of RNA polymerase II transcription subunit 17 (SRB4) from Saccharomyces cerevisiae (strain ATCC 204508 / S288c) (Baker's yeast).